The following is a 249-amino-acid chain: Phosphate import ATP-binding protein PstB 1 (249 aa).

The ABC transporter domain maps to 4–244 (FNIENLDLFY…PKDDRTQGYV (241 aa)). 36-43 (GPSGCGKS) contributes to the ATP binding site.

This sequence belongs to the ABC transporter superfamily. Phosphate importer (TC 3.A.1.7) family. As to quaternary structure, the complex is composed of two ATP-binding proteins (PstB), two transmembrane proteins (PstC and PstA) and a solute-binding protein (PstS).

It localises to the cell inner membrane. It catalyses the reaction phosphate(out) + ATP + H2O = ADP + 2 phosphate(in) + H(+). In terms of biological role, part of the ABC transporter complex PstSACB involved in phosphate import. Responsible for energy coupling to the transport system. The polypeptide is Phosphate import ATP-binding protein PstB 1 (Aliivibrio fischeri (strain ATCC 700601 / ES114) (Vibrio fischeri)).